The following is a 387-amino-acid chain: GTPase Obg (387 aa).

The 159-residue stretch at 1 to 159 (MKFLDEAKIY…MWVRLEMKLL (159 aa)) folds into the Obg domain. In terms of domain architecture, OBG-type G spans 160 to 334 (ADVGLVGMPN…LVYHVGGMVK (175 aa)). Residues 166-173 (GMPNAGKS), 191-195 (FTTLQ), 213-216 (DIPG), 283-286 (SKAD), and 315-317 (SSA) each bind GTP. Positions 173 and 193 each coordinate Mg(2+). The interval 347–379 (LEDAPTRAGSKALRDEHAPSWQDDDDDDDDDDG) is disordered. A compositionally biased stretch (acidic residues) spans 368–379 (QDDDDDDDDDDG).

The protein belongs to the TRAFAC class OBG-HflX-like GTPase superfamily. OBG GTPase family. As to quaternary structure, monomer. Mg(2+) serves as cofactor.

Its subcellular location is the cytoplasm. An essential GTPase which binds GTP, GDP and possibly (p)ppGpp with moderate affinity, with high nucleotide exchange rates and a fairly low GTP hydrolysis rate. Plays a role in control of the cell cycle, stress response, ribosome biogenesis and in those bacteria that undergo differentiation, in morphogenesis control. This chain is GTPase Obg, found in Magnetococcus marinus (strain ATCC BAA-1437 / JCM 17883 / MC-1).